The chain runs to 67 residues: DNA-directed RNA polymerase subunit omega (67 aa).

It belongs to the RNA polymerase subunit omega family. In terms of assembly, the RNAP catalytic core consists of 2 alpha, 1 beta, 1 beta' and 1 omega subunit. When a sigma factor is associated with the core the holoenzyme is formed, which can initiate transcription.

It carries out the reaction RNA(n) + a ribonucleoside 5'-triphosphate = RNA(n+1) + diphosphate. Functionally, promotes RNA polymerase assembly. Latches the N- and C-terminal regions of the beta' subunit thereby facilitating its interaction with the beta and alpha subunits. In Dictyoglomus turgidum (strain DSM 6724 / Z-1310), this protein is DNA-directed RNA polymerase subunit omega.